A 294-amino-acid polypeptide reads, in one-letter code: ATP phosphoribosyltransferase (294 aa).

The protein belongs to the ATP phosphoribosyltransferase family. Long subfamily. It depends on Mg(2+) as a cofactor.

It localises to the cytoplasm. The enzyme catalyses 1-(5-phospho-beta-D-ribosyl)-ATP + diphosphate = 5-phospho-alpha-D-ribose 1-diphosphate + ATP. Its pathway is amino-acid biosynthesis; L-histidine biosynthesis; L-histidine from 5-phospho-alpha-D-ribose 1-diphosphate: step 1/9. Feedback inhibited by histidine. Functionally, catalyzes the condensation of ATP and 5-phosphoribose 1-diphosphate to form N'-(5'-phosphoribosyl)-ATP (PR-ATP). Has a crucial role in the pathway because the rate of histidine biosynthesis seems to be controlled primarily by regulation of HisG enzymatic activity. The protein is ATP phosphoribosyltransferase of Chlorobium chlorochromatii (strain CaD3).